The primary structure comprises 3914 residues: Trichosetin synthetase PKS-NRPS1 (3914 aa).

In terms of domain architecture, Ketosynthase family 3 (KS3) spans 4-420 (NEPIAIIGSA…GTNAHAIIEA (417 aa)). Active-site for beta-ketoacyl synthase activity residues include Cys177, His301, and His340. Residues 525-847 (VLTGQGAQWP…REKDDIQQFA (323 aa)) form a malonyl-CoA:ACP transacylase (MAT) domain region. The N-terminal hotdog fold stretch occupies residues 913 to 1047 (HPILGRRCHD…AHVKASLSVP (135 aa)). The dehydratase (DH) domain stretch occupies residues 913–1214 (HPILGRRCHD…MELVPFSPAT (302 aa)). In terms of domain architecture, PKS/mFAS DH spans 913–1216 (HPILGRRCHD…LVPFSPATPE (304 aa)). The active-site Proton acceptor; for dehydratase activity is His946. Residues 1062–1216 (LRKVEVDRFY…LVPFSPATPE (155 aa)) are C-terminal hotdog fold. Residue Asp1122 is the Proton donor; for dehydratase activity of the active site. The methyltransferase (MT) domain stretch occupies residues 1364–1593 (EGFGLDLVNK…DLPETKSTEL (230 aa)). Residues 2083–2255 (TFLLIGLSGE…VAASSIDISS (173 aa)) are ketoreductase (KR) domain. A Carrier 1 domain is found at 2356–2436 (LADVKTKADA…DLIEESLNLI (81 aa)). The residue at position 2396 (Ser2396) is an O-(pantetheine 4'-phosphoryl)serine. Residues 2447–2518 (EAGSTPTTQP…DSTDNSTPLK (72 aa)) form a disordered region. The span at 2481–2500 (QQTGSDSSRSPIDTPLTSME) shows a compositional bias: polar residues. Positions 2529–2956 (SYGQAGFWFL…VQGTNKAADT (428 aa)) are condensation (C) domain. Residues 2991-3388 (QTIQANSTKV…LLFCDGRLED (398 aa)) form an adenylation (A) (KR) domain region. In terms of domain architecture, Carrier 2 spans 3502–3579 (GTLTVAEQRL…TMAVVLESCG (78 aa)). O-(pantetheine 4'-phosphoryl)serine is present on Ser3539. Positions 3615-3831 (LTGSAGYLGR…VLPTGDIVKA (217 aa)) are reductase (RED) domain.

The protein in the C-terminal section; belongs to the NRP synthetase family.

The catalysed reaction is L-serine + 7 malonyl-CoA + acetyl-CoA + 2 S-adenosyl-L-methionine + ATP + 8 NADPH + 11 H(+) = (5S)-3-[(2E,6R,8E,10E,12E)-2,6-dimethyltetradeca-2,8,10,12-tetraenoyl]-5-(hydroxymethyl)pyrrolidine-2,4-dione + AMP + 2 S-adenosyl-L-homocysteine + 7 CO2 + diphosphate + 8 NADP(+) + 8 CoA + 6 H2O. The protein operates within mycotoxin biosynthesis. Functionally, hybrid PKS-NRPS synthetase; part of the gene cluster that mediates the biosynthesis of trichosetin, a trans-fused decalin-containing tetramic acid with antimicrobial activity. The PKS module of PKS-NRPS1 together with the enoylreductase (ER) catalyze the formation of the polyketide unit which is then conjugated to L-serine by the condensation domain of the PKS-NRPS1 NRPS module. Activity of the Dieckmann cyclase domain (RED) results in release of the Dieckmann product intermediate. Diels-Alderase (DA) is involved in endo-selective Diels-Alder cycloaddition to form the decalin ring, leading to the production of N-desmethylequisetin also called trichosetin. The cluster does not contain the equisetin N-methyltransferase and consequently, trichosetin is isolated as final product. The protein is Trichosetin synthetase PKS-NRPS1 of Gibberella fujikuroi (strain CBS 195.34 / IMI 58289 / NRRL A-6831) (Bakanae and foot rot disease fungus).